A 223-amino-acid chain; its full sequence is Uracil-DNA glycosylase (223 aa).

The Proton acceptor role is filled by Asp67.

It belongs to the uracil-DNA glycosylase (UDG) superfamily. UNG family.

The protein localises to the cytoplasm. It catalyses the reaction Hydrolyzes single-stranded DNA or mismatched double-stranded DNA and polynucleotides, releasing free uracil.. Excises uracil residues from the DNA which can arise as a result of misincorporation of dUMP residues by DNA polymerase or due to deamination of cytosine. This Borrelia turicatae (strain 91E135) protein is Uracil-DNA glycosylase.